Consider the following 190-residue polypeptide: Elongation factor P-like protein (190 aa).

This sequence belongs to the elongation factor P family.

This Yersinia enterocolitica serotype O:8 / biotype 1B (strain NCTC 13174 / 8081) protein is Elongation factor P-like protein.